A 338-amino-acid polypeptide reads, in one-letter code: UPF0324 membrane protein TauZ (338 aa).

10 helical membrane-spanning segments follow: residues 12–31 (IEAA…TAQF), 36–55 (YGAP…NFLA), 75–92 (LGVA…LAAL), 96–118 (AIAL…SRLV), 125–147 (ALLT…AAVL), 162–184 (LSVT…FFGF), 191–213 (VFLG…IGPE), 223–245 (LIRV…ARGL), 258–280 (PGFV…PAAV), and 315–337 (AIAL…LHVL).

This sequence belongs to the UPF0324 family.

It is found in the cell membrane. The polypeptide is UPF0324 membrane protein TauZ (tauZ) (Paracoccus denitrificans).